The chain runs to 134 residues: Putative pre-16S rRNA nuclease (134 aa).

The protein belongs to the YqgF nuclease family.

It localises to the cytoplasm. Its function is as follows. Could be a nuclease involved in processing of the 5'-end of pre-16S rRNA. This Helicobacter pylori (strain P12) protein is Putative pre-16S rRNA nuclease.